The primary structure comprises 128 residues: Aspartate 1-decarboxylase (128 aa).

Serine 25 functions as the Schiff-base intermediate with substrate; via pyruvic acid in the catalytic mechanism. Serine 25 is subject to Pyruvic acid (Ser). Position 57 (threonine 57) interacts with substrate. Tyrosine 58 acts as the Proton donor in catalysis. Position 73–75 (73–75 (GSA)) interacts with substrate.

Belongs to the PanD family. In terms of assembly, heterooctamer of four alpha and four beta subunits. The cofactor is pyruvate. In terms of processing, is synthesized initially as an inactive proenzyme, which is activated by self-cleavage at a specific serine bond to produce a beta-subunit with a hydroxyl group at its C-terminus and an alpha-subunit with a pyruvoyl group at its N-terminus.

The protein localises to the cytoplasm. The enzyme catalyses L-aspartate + H(+) = beta-alanine + CO2. It participates in cofactor biosynthesis; (R)-pantothenate biosynthesis; beta-alanine from L-aspartate: step 1/1. Its function is as follows. Catalyzes the pyruvoyl-dependent decarboxylation of aspartate to produce beta-alanine. The chain is Aspartate 1-decarboxylase from Burkholderia ambifaria (strain ATCC BAA-244 / DSM 16087 / CCUG 44356 / LMG 19182 / AMMD) (Burkholderia cepacia (strain AMMD)).